Here is a 299-residue protein sequence, read N- to C-terminus: Tyrosine recombinase XerC (299 aa).

Residues 1-86 form the Core-binding (CB) domain; the sequence is MRNELLDFLE…AIRSLFKFLT (86 aa). The Tyr recombinase domain maps to 107–293; sequence KLPEFLSIEE…NQARMTEVYN (187 aa). Catalysis depends on residues Arg146, Lys170, His245, Arg248, and His271. Catalysis depends on Tyr280, which acts as the O-(3'-phospho-DNA)-tyrosine intermediate.

Belongs to the 'phage' integrase family. XerC subfamily. In terms of assembly, forms a cyclic heterotetrameric complex composed of two molecules of XerC and two molecules of XerD.

Its subcellular location is the cytoplasm. Functionally, site-specific tyrosine recombinase, which acts by catalyzing the cutting and rejoining of the recombining DNA molecules. The XerC-XerD complex is essential to convert dimers of the bacterial chromosome into monomers to permit their segregation at cell division. It also contributes to the segregational stability of plasmids. This is Tyrosine recombinase XerC from Natranaerobius thermophilus (strain ATCC BAA-1301 / DSM 18059 / JW/NM-WN-LF).